Consider the following 316-residue polypeptide: uncharacterized protein (316 aa).

It to yeast YGR277c.

This is an uncharacterized protein from Schizosaccharomyces pombe (strain 972 / ATCC 24843) (Fission yeast).